Consider the following 587-residue polypeptide: FAD-dependent monooxygenase ankC (587 aa).

A helical membrane pass occupies residues 7–27; the sequence is AVDVLIIGAGPAGLIAAMWMA. FAD is bound by residues tyrosine 245 and aspartate 311.

Belongs to the PheA/TfdB FAD monooxygenase family. In terms of assembly, homodimer. FAD is required as a cofactor.

It localises to the membrane. It carries out the reaction cyclo(L-arginyl-L-dehydrotyrosyl) + AH2 + O2 = cyclo(L-arginyl-(Z)-dehydro-3,4-dihydroxytyrosyl) + A + H2O. It participates in secondary metabolite biosynthesis. Functionally, FAD-dependent monooxygenase; part of the ank cluster that mediates the biosynthesis of NK13650 C, a highly modified cyclo-arginine-tyrosine dipeptide. AnkC uses as substrate the dehydro-cyclodipeptide intermediate generated by the monooxygase ankB and acts as a hydroxylase that installs the m-OH through a canonical flavin-dependent aromatic hydroxylation mechanism. Within the pathway, the cyclodipeptide synthase ankA acts as the scaffold-generating enzyme and is responsible for formation of the cyclo-Arg-Tyr diketopiperazine (cRY) from L-Arg and L-Tyr. The ankA product cRY is desaturated by the cytochrome P450 monooxygenase ankB to yield a dehydro-cyclodipeptide intermediate. The FAD-dependent monooxygenase ankC then installs the m-OH, ankD catalyzes the attachment of L-homoserine, and ankE ligates citrate to the ankD product to yield NK13650 B. The O-methyltransferase ankF is responsible for methylation of the C-17 phenol group of NK13650 B to produce NK13650 D. Amidation of NK13650 D with L-Asp by ankG then leads to the production of NK13650 C, whereas amidation of NK13650 B produces NK13650 A. In Aspergillus thermomutatus (Neosartorya pseudofischeri), this protein is FAD-dependent monooxygenase ankC.